We begin with the raw amino-acid sequence, 232 residues long: Putative N-acetylmannosamine-6-phosphate 2-epimerase (232 aa).

The protein belongs to the NanE family.

It carries out the reaction an N-acyl-D-glucosamine 6-phosphate = an N-acyl-D-mannosamine 6-phosphate. It participates in amino-sugar metabolism; N-acetylneuraminate degradation; D-fructose 6-phosphate from N-acetylneuraminate: step 3/5. Converts N-acetylmannosamine-6-phosphate (ManNAc-6-P) to N-acetylglucosamine-6-phosphate (GlcNAc-6-P). The chain is Putative N-acetylmannosamine-6-phosphate 2-epimerase from Proteus mirabilis (strain HI4320).